The following is a 2224-amino-acid chain: Coagulation factor V (2224 aa).

Positions 1-28 are cleaved as a signal peptide; the sequence is MFPGCPRLWVLVVLGTSWVGWGSQGTEA. Plastocyanin-like domains follow at residues 30–193, 203–329, 348–526, and 536–684; these read QLRQ…LLIC, TQKT…IKNC, KRWE…LLIC, and IQRA…DVKC. F5/8 type A domains lie at 30 to 329 and 348 to 684; these read QLRQ…IKNC and KRWE…DVKC. N51 and N55 each carry an N-linked (GlcNAc...) asparagine glycan. D139 and D140 together coordinate Ca(2+). A disulfide bridge connects residues C167 and C193. N239, N297, N382, N460, and N468 each carry an N-linked (GlcNAc...) asparagine glycan. The cysteines at positions 248 and 329 are disulfide-linked. C500 and C526 are joined by a disulfide. N554 is a glycosylation site (N-linked (GlcNAc...) asparagine). A disulfide bridge connects residues C603 and C684. T640 carries the post-translational modification Phosphothreonine. Residues 692-1573 are b; that stretch reads SYEIFEPPES…PDNIAAWYLR (882 aa). Sulfotyrosine is present on residues Y693, Y724, and Y726. A propeptide spans 738–1573 (activation peptide (connecting region)); it reads SFRNSSLNQE…PDNIAAWYLR (836 aa). 5 N-linked (GlcNAc...) asparagine glycosylation sites follow: N741, N752, N760, N776, and N782. O-linked (GalNAc...) threonine glycosylation occurs at T805. A glycan (N-linked (GlcNAc...) asparagine) is linked at N821. Positions 822-831 are enriched in polar residues; it reads SSTAEHSSPY. The segment at 822–842 is disordered; sequence SSTAEHSSPYSEDPIEDPLQP. S859 is subject to Phosphoserine; by FAM20C. Residues 894-927 are disordered; sequence LSQDTGSPSGMRPWEDLPSQDTGSPSRMRPWKDP. A run of 2 repeats spans residues 895-911 and 912-928. Positions 895 to 928 are 2 X 17 AA tandem repeats; the sequence is SQDTGSPSGMRPWEDLPSQDTGSPSRMRPWKDPP. N938 and N977 each carry an N-linked (GlcNAc...) asparagine glycan. Disordered regions lie at residues 982–1001 and 1029–1048; these read WGES…HPKF and TRKK…PRTF. A compositionally biased stretch (basic residues) spans 1029-1040; sequence TRKKKKEKHTHH. N-linked (GlcNAc...) asparagine glycans are attached at residues N1074, N1083, N1103, and N1106. Residues 1097 to 1157 are disordered; that stretch reads LPDHNQNSSN…SSSPELSEML (61 aa). Over residues 1099 to 1111 the composition is skewed to polar residues; it reads DHNQNSSNDTGQA. The span at 1139–1154 shows a compositional bias: low complexity; sequence HSTSDPSHRSSSPELS. 35 consecutive repeat copies span residues 1185–1193, 1194–1202, 1203–1211, 1212–1220, 1221–1229, 1230–1238, 1239–1247, 1248–1256, 1257–1265, 1266–1274, 1275–1283, 1284–1292, 1293–1301, 1302–1310, 1311–1319, 1320–1328, 1329–1337, 1338–1346, 1347–1355, 1356–1364, 1365–1373, 1374–1382, 1383–1391, 1392–1400, 1401–1409, 1410–1418, 1419–1427, 1428–1436, 1437–1445, 1446–1454, 1455–1463, 1464–1472, 1473–1481, 1482–1490, and 1493–1501. Residues 1185–1501 are 35 X 9 AA approximate tandem repeats of [TNP]-L-S-P-D-L-S-Q-T; it reads VISPDLSQVT…SPSSPTLNDT (317 aa). The disordered stretch occupies residues 1341–1367; the sequence is PELSQTNLSPALGQMPLSPDPSHTTLS. N-linked (GlcNAc...) asparagine glycosylation occurs at N1479. A glycan (N-linked (GlcNAc...) asparagine) is linked at N1499. A sulfotyrosine mark is found at Y1522, Y1538, and Y1543. Residue N1559 is glycosylated (N-linked (GlcNAc...) asparagine). 2 Plastocyanin-like domains span residues 1578 to 1751 and 1761 to 1907; these read NRRN…LLIC and NMPM…DRDC. The 330-residue stretch at 1578–1907 folds into the F5/8 type A 3 domain; sequence NRRNYYIAAE…TPFLIMDRDC (330 aa). Y1593 is modified (sulfotyrosine). N-linked (GlcNAc...) asparagine glycosylation is present at N1703. An intrachain disulfide couples C1725 to C1751. Cu cation-binding residues include H1843 and H1845. Intrachain disulfides connect C1907–C2061 and C2066–C2221. 2 consecutive F5/8 type C domains span residues 1907-2061 and 2066-2221; these read CRMP…LQGC and CSTP…LFGC. Residues N2010 and N2209 are each glycosylated (N-linked (GlcNAc...) asparagine).

Belongs to the multicopper oxidase family. Factor Va, the activated form of factor V, is composed of a heavy chain and a light chain, non-covalently bound. The interaction between the two chains is calcium-dependent. Forms heterodimer with SERPINA5. Thrombin activates factor V proteolytically to the active cofactor, factor Va (formation of a heavy chain at the N-terminus and a light chain at the C-terminus). In terms of processing, sulfation is required for efficient thrombin cleavage and activation and for full procoagulant activity. Post-translationally, activated protein C inactivates factor V and factor Va by proteolytic degradation. Phosphorylated by FAM20C in the extracellular medium. As to expression, plasma.

It localises to the secreted. With respect to regulation, inhibited by SERPINA5. Functionally, central regulator of hemostasis. It serves as a critical cofactor for the prothrombinase activity of factor Xa that results in the activation of prothrombin to thrombin. This chain is Coagulation factor V (F5), found in Homo sapiens (Human).